The following is a 429-amino-acid chain: MRSYERSKAAYEEAVTLMPGGVNSPVRAFKSVGMTPIFMARGQGAKIYDIDGNEYIDYVLSWGPLILGHADPQVVEALKRVAEQGTSFGAPTLLENELAKLVIERVPSVEIVRMVNSGTEATMSALRLARGYTKRNKIIKFEGSYHGHGDSLLIKAGSGVATLGLPDSPGVPQSVAQHTITVPYNDLDSVRYAFERFGEDIAAVIVEPVAGNMGVVPPVPGFLEGLRDVTKQYGALLIFDEVMTGFRVDYHCAQGYYGVEPDLTCLGKVIGGGLPVGAYGGKAEIMEQVAPSGPVYQAGTLSGNPLAMTAGYETLRQLTPETYKEFRRKAARLEEGLHQAAEKYEIPHTINRAGSMIGFFFTNEPVINYETAKTSDLELFAAYYREMANEGIFLPPSQFEGLFLSTAHSDEDIEYTIAAAERVFARLRG.

N6-(pyridoxal phosphate)lysine is present on lysine 268.

Belongs to the class-III pyridoxal-phosphate-dependent aminotransferase family. HemL subfamily. Homodimer. Pyridoxal 5'-phosphate is required as a cofactor.

It is found in the cytoplasm. It catalyses the reaction (S)-4-amino-5-oxopentanoate = 5-aminolevulinate. Its pathway is porphyrin-containing compound metabolism; protoporphyrin-IX biosynthesis; 5-aminolevulinate from L-glutamyl-tRNA(Glu): step 2/2. This is Glutamate-1-semialdehyde 2,1-aminomutase 2 from Geobacillus thermodenitrificans (strain NG80-2).